The following is a 409-amino-acid chain: Dual-specificity RNA methyltransferase RlmN (409 aa).

Glu126 serves as the catalytic Proton acceptor. The Radical SAM core domain occupies 132-373 (EEGRGTLCLS…NQAGYASPIR (242 aa)). An intrachain disulfide couples Cys139 to Cys384. Residues Cys146, Cys150, and Cys153 each coordinate [4Fe-4S] cluster. S-adenosyl-L-methionine contacts are provided by residues 210 to 211 (GE), Ser242, 264 to 266 (SLH), and Asn341. Cys384 acts as the S-methylcysteine intermediate in catalysis.

This sequence belongs to the radical SAM superfamily. RlmN family. Requires [4Fe-4S] cluster as cofactor.

It localises to the cytoplasm. It catalyses the reaction adenosine(2503) in 23S rRNA + 2 reduced [2Fe-2S]-[ferredoxin] + 2 S-adenosyl-L-methionine = 2-methyladenosine(2503) in 23S rRNA + 5'-deoxyadenosine + L-methionine + 2 oxidized [2Fe-2S]-[ferredoxin] + S-adenosyl-L-homocysteine. It carries out the reaction adenosine(37) in tRNA + 2 reduced [2Fe-2S]-[ferredoxin] + 2 S-adenosyl-L-methionine = 2-methyladenosine(37) in tRNA + 5'-deoxyadenosine + L-methionine + 2 oxidized [2Fe-2S]-[ferredoxin] + S-adenosyl-L-homocysteine. In terms of biological role, specifically methylates position 2 of adenine 2503 in 23S rRNA and position 2 of adenine 37 in tRNAs. m2A2503 modification seems to play a crucial role in the proofreading step occurring at the peptidyl transferase center and thus would serve to optimize ribosomal fidelity. This chain is Dual-specificity RNA methyltransferase RlmN, found in Bartonella quintana (strain Toulouse) (Rochalimaea quintana).